A 364-amino-acid chain; its full sequence is DNA polymerase IV (364 aa).

Residues 14-198 (IIHIDMDAFF…LPIEKFHGVG (185 aa)) enclose the UmuC domain. The Mg(2+) site is built by aspartate 18 and aspartate 116. Glutamate 117 is an active-site residue.

It belongs to the DNA polymerase type-Y family. In terms of assembly, monomer. Mg(2+) serves as cofactor.

Its subcellular location is the cytoplasm. The enzyme catalyses DNA(n) + a 2'-deoxyribonucleoside 5'-triphosphate = DNA(n+1) + diphosphate. Functionally, poorly processive, error-prone DNA polymerase involved in untargeted mutagenesis. Copies undamaged DNA at stalled replication forks, which arise in vivo from mismatched or misaligned primer ends. These misaligned primers can be extended by PolIV. Exhibits no 3'-5' exonuclease (proofreading) activity. May be involved in translesional synthesis, in conjunction with the beta clamp from PolIII. The sequence is that of DNA polymerase IV from Streptococcus pyogenes serotype M1.